We begin with the raw amino-acid sequence, 129 residues long: UPF0102 protein CPS_4433 (129 aa).

The protein belongs to the UPF0102 family.

This Colwellia psychrerythraea (strain 34H / ATCC BAA-681) (Vibrio psychroerythus) protein is UPF0102 protein CPS_4433.